Reading from the N-terminus, the 121-residue chain is Small ribosomal subunit protein uS13 (121 aa).

Positions Val-97–Lys-121 are disordered. Residues Gln-100 to Lys-121 are compositionally biased toward basic residues.

This sequence belongs to the universal ribosomal protein uS13 family. Part of the 30S ribosomal subunit. Forms a loose heterodimer with protein S19. Forms two bridges to the 50S subunit in the 70S ribosome.

Its function is as follows. Located at the top of the head of the 30S subunit, it contacts several helices of the 16S rRNA. In the 70S ribosome it contacts the 23S rRNA (bridge B1a) and protein L5 of the 50S subunit (bridge B1b), connecting the 2 subunits; these bridges are implicated in subunit movement. Contacts the tRNAs in the A and P-sites. The polypeptide is Small ribosomal subunit protein uS13 (Parasynechococcus marenigrum (strain WH8102)).